Here is a 163-residue protein sequence, read N- to C-terminus: MSRRHAAEKRVILPDMKYNSVLLSRFINNIMKEGKKALAEKIVYSAFDKIEKKHKADPYQTFSNAMNNVKPYLEVTSVRVGGANYQVPTPVDERRGYALASRWIITAATKRSEKMMIDKLAEELFEASNNRGVAIKKKEDTHKMAEANKAFSHFSPKKTKQGN.

Belongs to the universal ribosomal protein uS7 family. Part of the 30S ribosomal subunit. Contacts proteins S9 and S11.

In terms of biological role, one of the primary rRNA binding proteins, it binds directly to 16S rRNA where it nucleates assembly of the head domain of the 30S subunit. Is located at the subunit interface close to the decoding center, probably blocks exit of the E-site tRNA. This chain is Small ribosomal subunit protein uS7, found in Rickettsia bellii (strain RML369-C).